The primary structure comprises 435 residues: Nucleoredoxin (435 aa).

Ser-2 carries the post-translational modification N-acetylserine. Residues 167-321 (PKPFREVIAG…VLELSDSNAV (155 aa)) enclose the Thioredoxin domain.

This sequence belongs to the nucleoredoxin family. In terms of assembly, associates with the phosphatase 2A holoenzyme. Interacts with PPP2CA; the interaction is direct. Interacts with DVL1 (via PDZ domain); the interaction is direct and regulated by oxidative stress.

It is found in the cytoplasm. It localises to the cytosol. Its subcellular location is the nucleus. The catalysed reaction is [protein]-dithiol + NAD(+) = [protein]-disulfide + NADH + H(+). The enzyme catalyses [protein]-dithiol + NADP(+) = [protein]-disulfide + NADPH + H(+). Functions as a redox-dependent negative regulator of the Wnt signaling pathway, possibly by preventing ubiquitination of DVL3 by the BCR(KLHL12) complex. May also function as a transcriptional regulator act as a regulator of protein phosphatase 2A (PP2A). This is Nucleoredoxin (NXN) from Bos taurus (Bovine).